Here is a 143-residue protein sequence, read N- to C-terminus: MSIIKEFKEFAVKGNVMDLAVGVIIGGAFSKIVDSVVKDLIMPVIGVLTGGLDFSNKFVLLGTIPPTFKGNPDSFKDLQAAGVAAFGYGSFITVAINFVILAFIIFLMVKFINKLRKPEEAAPAATPEDTVLLREIRDSLKQR.

The next 2 membrane-spanning stretches (helical) occupy residues 10–30 and 89–109; these read FAVK…GAFS and GSFI…FLMV.

The protein belongs to the MscL family. In terms of assembly, homopentamer.

It is found in the cell inner membrane. Functionally, channel that opens in response to stretch forces in the membrane lipid bilayer. May participate in the regulation of osmotic pressure changes within the cell. The polypeptide is Large-conductance mechanosensitive channel (Burkholderia cenocepacia (strain ATCC BAA-245 / DSM 16553 / LMG 16656 / NCTC 13227 / J2315 / CF5610) (Burkholderia cepacia (strain J2315))).